The following is a 209-amino-acid chain: Small ribosomal subunit protein uS4 (209 aa).

An S4 RNA-binding domain is found at 98-161; that stretch reads ARLDNVVYRM…RDLEVIKKAV (64 aa).

Belongs to the universal ribosomal protein uS4 family. Part of the 30S ribosomal subunit. Contacts protein S5. The interaction surface between S4 and S5 is involved in control of translational fidelity.

Its function is as follows. One of the primary rRNA binding proteins, it binds directly to 16S rRNA where it nucleates assembly of the body of the 30S subunit. With S5 and S12 plays an important role in translational accuracy. In Thermotoga petrophila (strain ATCC BAA-488 / DSM 13995 / JCM 10881 / RKU-1), this protein is Small ribosomal subunit protein uS4.